Reading from the N-terminus, the 235-residue chain is NAD-dependent protein deacylase (235 aa).

One can recognise a Deacetylase sirtuin-type domain in the interval 1-235 (MDLRLFKNIV…VPRFITQFLE (235 aa)). 14 to 33 (GAGISAESGIRTFRDQDGLW) provides a ligand contact to NAD(+). 2 residues coordinate substrate: Tyr-58 and Arg-61. 95–98 (QNVD) serves as a coordination point for NAD(+). Residue His-113 is the Proton acceptor of the active site. Residues Cys-121, Cys-124, Cys-140, and Cys-143 each coordinate Zn(2+). NAD(+) is bound by residues 180 to 182 (GTS), 204 to 206 (NLK), and Ala-222.

This sequence belongs to the sirtuin family. Class III subfamily. It depends on Zn(2+) as a cofactor.

The protein localises to the cytoplasm. It carries out the reaction N(6)-acetyl-L-lysyl-[protein] + NAD(+) + H2O = 2''-O-acetyl-ADP-D-ribose + nicotinamide + L-lysyl-[protein]. The catalysed reaction is N(6)-succinyl-L-lysyl-[protein] + NAD(+) + H2O = 2''-O-succinyl-ADP-D-ribose + nicotinamide + L-lysyl-[protein]. Functionally, NAD-dependent lysine deacetylase and desuccinylase that specifically removes acetyl and succinyl groups on target proteins. Modulates the activities of several proteins which are inactive in their acylated form. The chain is NAD-dependent protein deacylase from Bdellovibrio bacteriovorus (strain ATCC 15356 / DSM 50701 / NCIMB 9529 / HD100).